The sequence spans 210 residues: Imidazole glycerol phosphate synthase subunit HisH (210 aa).

Residues 1-205 (MIAVINYGAG…VELALSRGSG (205 aa)) enclose the Glutamine amidotransferase type-1 domain. The Nucleophile role is filled by C79. Catalysis depends on residues H180 and E182.

Heterodimer of HisH and HisF.

The protein resides in the cytoplasm. It catalyses the reaction 5-[(5-phospho-1-deoxy-D-ribulos-1-ylimino)methylamino]-1-(5-phospho-beta-D-ribosyl)imidazole-4-carboxamide + L-glutamine = D-erythro-1-(imidazol-4-yl)glycerol 3-phosphate + 5-amino-1-(5-phospho-beta-D-ribosyl)imidazole-4-carboxamide + L-glutamate + H(+). The catalysed reaction is L-glutamine + H2O = L-glutamate + NH4(+). The protein operates within amino-acid biosynthesis; L-histidine biosynthesis; L-histidine from 5-phospho-alpha-D-ribose 1-diphosphate: step 5/9. Functionally, IGPS catalyzes the conversion of PRFAR and glutamine to IGP, AICAR and glutamate. The HisH subunit catalyzes the hydrolysis of glutamine to glutamate and ammonia as part of the synthesis of IGP and AICAR. The resulting ammonia molecule is channeled to the active site of HisF. The sequence is that of Imidazole glycerol phosphate synthase subunit HisH from Herpetosiphon aurantiacus (strain ATCC 23779 / DSM 785 / 114-95).